Consider the following 244-residue polypeptide: tRNA (guanine-N(1)-)-methyltransferase (244 aa).

Residues Gly120 and 140–145 (IGDYIL) contribute to the S-adenosyl-L-methionine site.

This sequence belongs to the RNA methyltransferase TrmD family. Homodimer.

It is found in the cytoplasm. It catalyses the reaction guanosine(37) in tRNA + S-adenosyl-L-methionine = N(1)-methylguanosine(37) in tRNA + S-adenosyl-L-homocysteine + H(+). Functionally, specifically methylates guanosine-37 in various tRNAs. This Brucella abortus (strain S19) protein is tRNA (guanine-N(1)-)-methyltransferase.